A 689-amino-acid polypeptide reads, in one-letter code: Glycine--tRNA ligase beta subunit (689 aa).

Belongs to the class-II aminoacyl-tRNA synthetase family. As to quaternary structure, tetramer of two alpha and two beta subunits.

Its subcellular location is the cytoplasm. It carries out the reaction tRNA(Gly) + glycine + ATP = glycyl-tRNA(Gly) + AMP + diphosphate. The sequence is that of Glycine--tRNA ligase beta subunit from Salmonella choleraesuis (strain SC-B67).